The sequence spans 368 residues: Solute carrier family 35 member G1 (368 aa).

The next 10 helical transmembrane spans lie at 72-92, 100-120, 134-154, 161-181, 190-210, 225-245, 256-276, 289-309, 316-336, and 340-360; these read GLGL…SLFV, AVEI…PCLI, LFLF…YYAF, DATV…WIFL, AFFT…PFIF, IKGT…LVIL, LSIW…LFVI, LFLI…TKAV, LVAI…IAFF, and PTWW…GATI. EamA domains follow at residues 83–205 and 236–360; these read FLFS…LIVR and VLAA…GATI.

This sequence belongs to the TMEM20 family. In terms of assembly, interacts with STIM1; stimulated by depletion of intracellular calcium. Interacts with ORAI1. Interacts with the plasma membrane calcium-transporting ATPases ATP2B1 and ATP2B4. Interacts with ATP1A1, ATP2A2, KPNB1 and XPO1.

The protein localises to the cell membrane. It localises to the endoplasmic reticulum membrane. Functionally, may play a role in intracellular calcium sensing and homeostasis. May act as a negative regulator of plasma membrane calcium-transporting ATPases preventing calcium efflux from the cell. The protein is Solute carrier family 35 member G1 (Slc35g1) of Mus musculus (Mouse).